The following is a 613-amino-acid chain: Na(+)/H(+) antiporter NhaA 1 (613 aa).

The interval 1–24 (MTEASARTIGPLPSRFSRDPKTPR) is disordered. The na(+)/H(+) antiporter NhaA stretch occupies residues 1-408 (MTEASARTIG…DPARQDEARV (408 aa)). 11 helical membrane passes run 29–49 (AAAA…NSPW), 81–101 (GLMA…FVIG), 110–130 (AVPV…FLTF), 138–158 (QAWG…LAVI), 168–188 (IFLL…IALF), 191–211 (DDLK…LAMV), 231–251 (IALY…AVLI), 300–320 (AVGP…NAGV), 337–357 (WGIV…ATAL), 377–397 (GGAA…DVAI), and 408–428 (VGVL…FRIT). The Thioredoxin domain maps to 409 to 613 (GVLIASVLAF…SLIRALEAGR (205 aa)).

The protein in the N-terminal section; belongs to the NhaA Na(+)/H(+) (TC 2.A.33) antiporter family.

It localises to the cell membrane. The enzyme catalyses Na(+)(in) + 2 H(+)(out) = Na(+)(out) + 2 H(+)(in). In terms of biological role, na(+)/H(+) antiporter that extrudes sodium in exchange for external protons. This chain is Na(+)/H(+) antiporter NhaA 1, found in Mycobacterium sp. (strain JLS).